Consider the following 271-residue polypeptide: Aminoglycoside 3'-phosphotransferase (271 aa).

The active-site Proton acceptor is the D198.

This sequence belongs to the aminoglycoside phosphotransferase family.

The enzyme catalyses kanamycin A + ATP = kanamycin 3'-phosphate + ADP + H(+). Its function is as follows. Resistance to kanamycin and structurally-related aminoglycosides, including amikacin. The protein is Aminoglycoside 3'-phosphotransferase of Salmonella typhimurium.